The chain runs to 353 residues: Lipase chaperone (353 aa).

A helical membrane pass occupies residues 12 to 32 (IVLYLILGCVVVCGVWYSFDV).

It belongs to the lipase chaperone family.

The protein resides in the cell inner membrane. Functionally, may be involved in the folding of the extracellular lipase during its passage through the periplasm. The protein is Lipase chaperone of Xylella fastidiosa (strain M23).